We begin with the raw amino-acid sequence, 266 residues long: Putative transmembrane ascorbate-dependent reductase CYB561 homolog (266 aa).

Topologically, residues 1-22 (MSLLFDPGFVILREDQSVKLFN) are cytoplasmic. A helical transmembrane segment spans residues 23–43 (IILVMSQVFGGLAVLLVTIWM). The 214-residue stretch at 27–240 (MSQVFGGLAV…YTVCVLLLVL (214 aa)) folds into the Cytochrome b561 domain. At 44 to 61 (SKFESGFAWNEDPDKEFN) the chain is on the vesicular side. A helical transmembrane segment spans residues 62–82 (YHPTFMIMGMVFLFGEALLVY). The heme b site is built by H63, R83, and K90. Residues 83–95 (RVFRNERKKFSKT) are Cytoplasmic-facing. L-ascorbate is bound by residues K90 and K94. A helical transmembrane segment spans residues 96-116 (LHVILHSCVLVFMLMALKAVF). Heme b is bound by residues H97, 134-137 (NLVS), and H139. The Vesicular segment spans residues 117–141 (DYHNLHKDPSGNPAPIVNLVSLHSW). A helical membrane pass occupies residues 142–162 (IGLSVVILYFAQYIVGFITYF). Topologically, residues 163–176 (FPGMPIPIRQLVMP) are cytoplasmic. Position 171 (R171) interacts with L-ascorbate. A helical membrane pass occupies residues 177 to 197 (FHQMFGVLIFIFVSITVAMGI). Heme b-binding residues include H178 and E199. Topologically, residues 198–219 (SERAAWKHTCWTKEGQMCAQQA) are vesicular. The chain crosses the membrane as a helical span at residues 220–240 (TSSFVGVFTFLYTVCVLLLVL). Over 241 to 266 (NPRWKRQSLPEEEGLHHLTSSHSMSD) the chain is Cytoplasmic. K245 contacts heme b.

Heme b serves as cofactor.

The protein resides in the membrane. The enzyme catalyses monodehydro-L-ascorbate radical(out) + L-ascorbate(in) = monodehydro-L-ascorbate radical(in) + L-ascorbate(out). In terms of biological role, putative transmembrane reductase that uses ascorbate as an electron donor in the cytoplasm and transfers electrons across membranes to reduce monodehydro-L-ascorbate radical in the lumen of secretory vesicles. This is Putative transmembrane ascorbate-dependent reductase CYB561 homolog from Caenorhabditis elegans.